The following is a 558-amino-acid chain: Putative transposase for insertion sequence IS1162 (558 aa).

The 83-residue stretch at 11–93 (IKECLRLKFE…PDLITIHREL (83 aa)) folds into the HTH IS408-type domain. The segment at residues 23–44 (LSHEKIARALQLSKGVVSKYVT) is a DNA-binding region (H-T-H motif). The Integrase catalytic domain maps to 139–336 (QQHRAGEKLF…HPYEVVTFKR (198 aa)). Positions 486–558 (QGLDQQPLPK…AAGQPQPELR (73 aa)) are disordered.

The protein belongs to the transposase IS21/IS408/IS1162 family.

Its function is as follows. Required for the transposition of the insertion element. This chain is Putative transposase for insertion sequence IS1162, found in Pseudomonas fluorescens.